A 4069-amino-acid polypeptide reads, in one-letter code: Cardiomyopathy-associated protein 5 (4069 aa).

Disordered stretches follow at residues 1–177 (MASR…SQVL), 341–387 (TVPS…DTPA), 442–525 (GLAA…EDSN), 538–558 (ESPLVSEKPFPPHMSPEVEHK), 597–705 (EYSV…VPSL), 732–793 (PSEE…RFTP), 844–872 (SSPDLVVASEHSFPPHTTEMTSECQAPPL), 890–948 (LERY…FSPD), 979–1009 (TSPSEHTILSDEDTEEAELFSPDSASQVSIP), 1041–1097 (ADEE…PEIP), 1160–1179 (VKEETKPASPHSVLPDSVPA), 1205–1237 (RKEEIVPDSQEATAHVSQDQKMEPQPPNVPESE), 1540–1575 (KETELPSSQNVSPASKHIIPKGKDEETASSSPELEN), 1594–1742 (PAVE…EEFQ), 1757–1809 (HPAD…ITEP), 1892–1988 (ENWM…VKLA), 2064–2175 (TISS…KKGI), 2187–2259 (FGSS…SGDG), 2385–2412 (PQQPKSASSNFASKNITKESEKPESIIL), 2425–2463 (SEDRLKKEMQNPTSLKISEEETKLRSVSPTEKKDNLENR), 2494–2527 (TQITLGSRSTELKESKADAMPQHFYQNEDYNERP), 2653–2706 (QEGN…VGTQ), and 2750–2862 (SSRD…SDVP). Over residues 27–47 (ETEEESEGEEDETAAESEEEP) the composition is skewed to acidic residues. Residues 48-62 (DSRLSDQDEEGKIKQ) show a composition bias toward basic and acidic residues. Residues 84–119 (TWETNSSRSSTPWASEESQTSGVCSREGSTVNSPPG) are compositionally biased toward polar residues. Basic residues predominate over residues 130–153 (KVRKRTHKSKHGSPSLRRKGNRKR). Position 155 is a phosphoserine (serine 155). Composition is skewed to polar residues over residues 156–177 (FESQDVPTNKKGSPLTSASQVL) and 341–350 (TVPSYSSSGR). Residues 489-499 (LEPSISLSEPL) are compositionally biased toward low complexity. Positions 500 to 510 (MLEEPEKEEIE) are enriched in acidic residues. Phosphoserine is present on serine 631. Positions 640 to 659 (AYSPAAAPTSESSLSPSTTE) are enriched in low complexity. Composition is skewed to polar residues over residues 664-673 (NQSPLFSTVT), 692-701 (PDSTSASEYS), and 752-775 (PSLSPSTTEKTSECQSPLPSTATS). Residues 1049–1063 (TAATPVSEQFSSSQK) are compositionally biased toward polar residues. The segment covering 1085–1094 (DKSEKAEIKP) has biased composition (basic and acidic residues). Positions 1214–1223 (QEATAHVSQD) are enriched in polar residues. Basic and acidic residues predominate over residues 1621-1630 (EPEKKDKPHQ). Over residues 1639-1662 (SEFSSDLGRQSGSIGTKQAKSPIT) the composition is skewed to polar residues. 3 stretches are compositionally biased toward basic and acidic residues: residues 1668-1687 (VLEKGPAELRSREGKEENRE), 1704-1714 (LREESQNEEIK), and 1786-1795 (ILDKLSEETG). Polar residues predominate over residues 1796 to 1808 (HPNSSQVLQSITE). Over residues 1935–1955 (SKDHTCEVRKQVLPHSAEESH) the composition is skewed to basic and acidic residues. The span at 1956-1980 (LSSQEAVSALDTSSGNTETLSSKSY) shows a compositional bias: polar residues. Residues 2085 to 2124 (NEKEAHRSTPPFPEEKPLEESKMVQSKVIDDADEGKKPSP) are compositionally biased toward basic and acidic residues. Residues 2145 to 2155 (SPESPEVTQNP) are compositionally biased toward polar residues. Basic and acidic residues-rich tracts occupy residues 2162–2172 (AKPDLPEEKGK) and 2232–2250 (KPADHSLSEVKLKTADEPR). The segment covering 2387–2399 (QPKSASSNFASKN) has biased composition (polar residues). Position 2404 is a phosphoserine (serine 2404). Positions 2441–2461 (ISEEETKLRSVSPTEKKDNLE) are enriched in basic and acidic residues. 3 stretches are compositionally biased toward basic and acidic residues: residues 2661 to 2681 (KSSRDMPDHSEEKEQFRESEL), 2750 to 2769 (SSRDMPDHSEEKEQFKESEL), and 2777 to 2804 (ITKESMKEGFPSKESERTLARPFDETKS). Serine 2813 carries the post-translational modification Phosphoserine. A compositionally biased stretch (basic and acidic residues) spans 2830–2847 (AVKKKEMPRSELTPERHT). The stretch at 2964 to 2988 (SIDQEESEQMQDKLEYLEEKASFKT) forms a coiled coil. Residues 3015 to 3031 (PLKENKQKETHKTKEEI) show a composition bias toward basic and acidic residues. 5 disordered regions span residues 3015–3037 (PLKENKQKETHKTKEEISTDSET), 3119–3156 (EKGHNILSHPETQSQNSADRNVSKDTKRDVDSKSPGMP), 3204–3231 (KKKEEETASEGDSVNSEASFPSRNSDTD), 3386–3421 (SGATHVQETSLEEPKILVPPEPSEERLRNSPVQDEY), and 3465–3495 (EFASEAEQSTPAEQKELGSERKEEDQLSSEV). Positions 3052-3365 (YFEKYTLIDY…GSHGNEVGNA (314 aa)) are required for RYR2 clustering. Over residues 3128–3138 (PETQSQNSADR) the composition is skewed to polar residues. Over residues 3139–3150 (NVSKDTKRDVDS) the composition is skewed to basic and acidic residues. Residues 3213–3227 (EGDSVNSEASFPSRN) show a composition bias toward polar residues. Serine 3228 is modified (phosphoserine). Residues 3477–3489 (EQKELGSERKEED) show a composition bias toward basic and acidic residues. The interval 3517-3544 (KCPISATDKVFGTHKDHEVSTLDTAISA) is amphipathic helix H1. A coiled-coil region spans residues 3544–3653 (AVKVQLAEFL…REAEELDEAV (110 aa)). The segment at 3545 to 3672 (VKVQLAEFLE…ERLLSAMEST (128 aa)) is B-box coiled-coil; BBC. The segment at 3631–3648 (SMDTAKDTLETIVREAEE) is amphipathic helix H2. Fibronectin type-III domains lie at 3704-3805 (VPQP…TAPS) and 3806-3898 (TPVI…TRGT). The tract at residues 3751 to 3767 (EVNELVEEYRLTVKESY) is amphipathic helix H3. The B30.2/SPRY domain occupies 3880-4065 (NAFGTSEQSE…LHLGIEPPDS (186 aa)).

As to quaternary structure, interacts with PRKAR2A. Interacts with ACTN2 and DTNBP1/dysbindin. Interacts with DES. Interacts with DMD/dystrophin. Interacts with the calcineurin catalytic subunit PPP3CA. Interacts with TTN. Interacts with CAPN3; this interaction, which results in CMYA5 proteolysis, may protect CAPN3 from autolysis. Interacts with FSD2. Identified in a complex composed of FSD2, CMYA5 and RYR2. Post-translationally, phosphorylated by PKA. As to expression, expressed in skeletal muscle; at a strong level and in heart.

It is found in the nucleus. It localises to the sarcoplasmic reticulum. The protein resides in the cytoplasm. The protein localises to the perinuclear region. Its subcellular location is the myofibril. It is found in the sarcomere. It localises to the m line. Its function is as follows. May serve as an anchoring protein that mediates the subcellular compartmentation of protein kinase A (PKA) via binding to PRKAR2A. May function as a repressor of calcineurin-mediated transcriptional activity. May attenuate calcineurin ability to induce slow-fiber gene program in muscle and may negatively modulate skeletal muscle regeneration. Plays a role in the assembly of ryanodine receptor (RYR2) clusters in striated muscle. This chain is Cardiomyopathy-associated protein 5 (CMYA5), found in Homo sapiens (Human).